Consider the following 166-residue polypeptide: Myosin regulatory light chain 2, ventricular/cardiac muscle isoform (166 aa).

S2 is modified (n,N,N-trimethylserine). Residues S14, S15, and S19 each carry the phosphoserine modification. EF-hand domains are found at residues 24–59, 94–129, and 130–165; these read TQIQEFKEAFTIMDQNRDGFIDKNDLRDTFAALGRV, DPEETILNAFKVFDPEGKGSLKADYVREMLTTQAER, and FSKEEIDQMFAAFPPDVTGNLDYKNLVHIITHGEEK. The Ca(2+) site is built by D37, N39, D41, and D48. T52 is modified (phosphothreonine).

Myosin is a hexamer of 2 heavy chains and 4 light chains. Interacts with MYOC. N-terminus is methylated by METTL11A/NTM1. In terms of processing, phosphorylated by MYLK3 and MYLK2; promotes cardiac muscle contraction and function. Dephosphorylated by PPP1CB complexed to PPP1R12B. The phosphorylated form in adult is expressed as gradients across the heart from endocardium (low phosphorylation) to epicardium (high phosphorylation); regulates cardiac torsion and workload distribution. Abundantly expressed in both cardiac and slow skeletal muscle (soleus), with no detectable expression in fast skeletal muscle (vastus lateralis) or non-muscle tissue.

It is found in the cytoplasm. The protein localises to the myofibril. The protein resides in the sarcomere. It localises to the a band. In terms of biological role, contractile protein that plays a role in heart development and function. Following phosphorylation, plays a role in cross-bridge cycling kinetics and cardiac muscle contraction by increasing myosin lever arm stiffness and promoting myosin head diffusion; as a consequence of the increase in maximum contraction force and calcium sensitivity of contraction force. These events altogether slow down myosin kinetics and prolong duty cycle resulting in accumulated myosins being cooperatively recruited to actin binding sites to sustain thin filament activation as a means to fine-tune myofilament calcium sensitivity to force. During cardiogenesis plays an early role in cardiac contractility by promoting cardiac myofibril assembly. This is Myosin regulatory light chain 2, ventricular/cardiac muscle isoform from Rattus norvegicus (Rat).